The sequence spans 373 residues: Queuine tRNA-ribosyltransferase (373 aa).

Residue aspartate 94 is the Proton acceptor of the active site. Substrate contacts are provided by residues 94 to 98 (DSGGF), aspartate 148, glutamine 190, and glycine 217. An RNA binding region spans residues 248–254 (GVGSPDC). Residue aspartate 267 is the Nucleophile of the active site. The segment at 272-276 (TRIAR) is RNA binding; important for wobble base 34 recognition. Positions 305, 307, 310, and 336 each coordinate Zn(2+).

It belongs to the queuine tRNA-ribosyltransferase family. As to quaternary structure, homodimer. Within each dimer, one monomer is responsible for RNA recognition and catalysis, while the other monomer binds to the replacement base PreQ1. It depends on Zn(2+) as a cofactor.

It catalyses the reaction 7-aminomethyl-7-carbaguanine + guanosine(34) in tRNA = 7-aminomethyl-7-carbaguanosine(34) in tRNA + guanine. It participates in tRNA modification; tRNA-queuosine biosynthesis. Its function is as follows. Catalyzes the base-exchange of a guanine (G) residue with the queuine precursor 7-aminomethyl-7-deazaguanine (PreQ1) at position 34 (anticodon wobble position) in tRNAs with GU(N) anticodons (tRNA-Asp, -Asn, -His and -Tyr). Catalysis occurs through a double-displacement mechanism. The nucleophile active site attacks the C1' of nucleotide 34 to detach the guanine base from the RNA, forming a covalent enzyme-RNA intermediate. The proton acceptor active site deprotonates the incoming PreQ1, allowing a nucleophilic attack on the C1' of the ribose to form the product. After dissociation, two additional enzymatic reactions on the tRNA convert PreQ1 to queuine (Q), resulting in the hypermodified nucleoside queuosine (7-(((4,5-cis-dihydroxy-2-cyclopenten-1-yl)amino)methyl)-7-deazaguanosine). The polypeptide is Queuine tRNA-ribosyltransferase (Moorella thermoacetica (strain ATCC 39073 / JCM 9320)).